The primary structure comprises 520 residues: T-box transcription factor TBX22 (520 aa).

The interval 1 to 91 (MALSSRARAF…NSSESLEEKD (91 aa)) is disordered. Over residues 33 to 49 (PELREKKGGEEEEERRS) the composition is skewed to basic and acidic residues. The span at 67–84 (STSASSGCGSDSGYGNSS) shows a compositional bias: low complexity. Positions 96-283 (LQGSELWKRF…RNPFAKGFRD (188 aa)) form a DNA-binding region, T-box.

Seems to be expressed at a low level.

The protein resides in the nucleus. Probable transcriptional regulator involved in developmental processes. This is major determinant crucial to palatogenesis. In Homo sapiens (Human), this protein is T-box transcription factor TBX22 (TBX22).